The sequence spans 184 residues: Ribosome maturation factor RimM (184 aa).

Residues 101–180 form the PRC barrel domain; sequence EGEFFYCDLV…KITTHNAKTL (80 aa).

This sequence belongs to the RimM family. Binds ribosomal protein uS19.

It localises to the cytoplasm. In terms of biological role, an accessory protein needed during the final step in the assembly of 30S ribosomal subunit, possibly for assembly of the head region. Essential for efficient processing of 16S rRNA. May be needed both before and after RbfA during the maturation of 16S rRNA. It has affinity for free ribosomal 30S subunits but not for 70S ribosomes. This Helicobacter pylori (strain ATCC 700392 / 26695) (Campylobacter pylori) protein is Ribosome maturation factor RimM.